The primary structure comprises 287 residues: Glycine--tRNA ligase alpha subunit (287 aa).

The protein belongs to the class-II aminoacyl-tRNA synthetase family. In terms of assembly, tetramer of two alpha and two beta subunits.

The protein localises to the cytoplasm. It carries out the reaction tRNA(Gly) + glycine + ATP = glycyl-tRNA(Gly) + AMP + diphosphate. This Campylobacter curvus (strain 525.92) protein is Glycine--tRNA ligase alpha subunit.